The sequence spans 442 residues: tRNA modification GTPase MnmE (442 aa).

(6S)-5-formyl-5,6,7,8-tetrahydrofolate-binding residues include Arg-22, Glu-79, and Lys-119. Positions 216–366 (GIKTCLVGAP…LLEKIKSIFA (151 aa)) constitute a TrmE-type G domain. Asn-226 provides a ligand contact to K(+). GTP contacts are provided by residues 226 to 231 (NSGKSS), 245 to 251 (SEIPGTT), and 270 to 273 (DTAG). Ser-230 lines the Mg(2+) pocket. The K(+) site is built by Ser-245, Ile-247, and Thr-250. Thr-251 contacts Mg(2+). Lys-442 serves as a coordination point for (6S)-5-formyl-5,6,7,8-tetrahydrofolate.

It belongs to the TRAFAC class TrmE-Era-EngA-EngB-Septin-like GTPase superfamily. TrmE GTPase family. In terms of assembly, homodimer. Heterotetramer of two MnmE and two MnmG subunits. It depends on K(+) as a cofactor.

Its subcellular location is the cytoplasm. Exhibits a very high intrinsic GTPase hydrolysis rate. Involved in the addition of a carboxymethylaminomethyl (cmnm) group at the wobble position (U34) of certain tRNAs, forming tRNA-cmnm(5)s(2)U34. The polypeptide is tRNA modification GTPase MnmE (Mesomycoplasma hyopneumoniae (strain 7448) (Mycoplasma hyopneumoniae)).